The sequence spans 537 residues: Glutamyl-tRNA reductase, chloroplastic (537 aa).

A chloroplast-targeting transit peptide spans 1-48 (MMASTTSATAAGGAFAAAKTRAGSSAAGGGACARVAAGGRRRSGVVVR). Substrate contacts are provided by residues 134 to 137 (TCNR), S194, 199 to 201 (EGQ), and Q205. C135 acts as the Nucleophile in catalysis. 276–281 (GAGKMG) serves as a coordination point for NADP(+).

This sequence belongs to the glutamyl-tRNA reductase family.

The protein localises to the plastid. Its subcellular location is the chloroplast. The enzyme catalyses (S)-4-amino-5-oxopentanoate + tRNA(Glu) + NADP(+) = L-glutamyl-tRNA(Glu) + NADPH + H(+). The protein operates within porphyrin-containing compound metabolism; protoporphyrin-IX biosynthesis; 5-aminolevulinate from L-glutamyl-tRNA(Glu): step 1/2. Its function is as follows. Catalyzes the NADPH-dependent reduction of glutamyl-tRNA(Glu) to glutamate 1-semialdehyde (GSA). This chain is Glutamyl-tRNA reductase, chloroplastic, found in Oryza sativa subsp. japonica (Rice).